Here is a 156-residue protein sequence, read N- to C-terminus: VapC ribonuclease AF_1683 (156 aa).

Residues 4–125 enclose the PINc domain; that stretch reads LIDTGIFFGF…KLISYDSRFS (122 aa). Mg(2+) contacts are provided by Asp6 and Asp103.

It belongs to the PINc/VapC protein family. Requires Mg(2+) as cofactor.

In terms of biological role, toxic component of a type II toxin-antitoxin (TA) system. An RNase. This is VapC ribonuclease AF_1683 from Archaeoglobus fulgidus (strain ATCC 49558 / DSM 4304 / JCM 9628 / NBRC 100126 / VC-16).